The sequence spans 75 residues: Translation initiation factor IF-1, chloroplastic (75 aa).

Belongs to the IF-1 family. As to quaternary structure, component of the 30S ribosomal translation pre-initiation complex which assembles on the 30S ribosome in the order IF-2 and IF-3, IF-1 and N-formylmethionyl-tRNA(fMet); mRNA recruitment can occur at any time during PIC assembly.

The protein localises to the plastid. The protein resides in the chloroplast. One of the essential components for the initiation of protein synthesis. Stabilizes the binding of IF-2 and IF-3 on the 30S subunit to which N-formylmethionyl-tRNA(fMet) subsequently binds. Helps modulate mRNA selection, yielding the 30S pre-initiation complex (PIC). Upon addition of the 50S ribosomal subunit IF-1, IF-2 and IF-3 are released leaving the mature 70S translation initiation complex. The protein is Translation initiation factor IF-1, chloroplastic (infA) of Cucumis sativus (Cucumber).